The chain runs to 439 residues: Exosome complex component RRP45 (439 aa).

The segment at 1–268 (MKETPLSNCE…AEITELILKA (268 aa)) is ARE binding. Serine 65 is modified (phosphoserine). Lysine 297 carries the N6-acetyllysine; alternate modification. A Glycyl lysine isopeptide (Lys-Gly) (interchain with G-Cter in SUMO1); alternate cross-link involves residue lysine 297. Residue lysine 297 forms a Glycyl lysine isopeptide (Lys-Gly) (interchain with G-Cter in SUMO2); alternate linkage. Phosphoserine is present on residues serine 306, valine 325, serine 327, and serine 346. 2 disordered regions span residues 335 to 363 (GTAQ…GGGD) and 391 to 439 (LSDS…RAAN). Residues 349 to 361 (DLEDSEKEDDEGG) are compositionally biased toward acidic residues. Residues serine 392, serine 394, lysine 409, and isoleucine 411 each carry the phosphoserine modification. Lysine 419 participates in a covalent cross-link: Glycyl lysine isopeptide (Lys-Gly) (interchain with G-Cter in SUMO2). Positions 425-439 (SKKPVKRRKKKRAAN) are enriched in basic residues.

This sequence belongs to the RNase PH family. In terms of assembly, component of the RNA exosome core complex (Exo-9), composed of EXOSC1, EXOSC2, EXOSC3, EXOSC4, EXOSC5, EXOSC6, EXOSC7, EXOSC8 and EXOSC9; within the complex interacts with EXOSC3, EXOSC4, EXOSC5 and DIS3. The catalytically inactive RNA exosome core complex (Exo-9) associates with the catalytic subunit EXOSC10/RRP6. Exo-9 may associate with DIS3 to form the nucleolar exosome complex, or DIS3L to form the cytoplasmic exosome complex. Exo-9 is formed by a hexameric base ring consisting of the heterodimers EXOSC4-EXOSC9, EXOSC5-EXOSC8 and EXOSC6-EXOSC7, and a cap ring consisting of EXOSC1, EXOSC2 and EXOSC3. The RNA exosome complex associates with cofactors C1D/RRP47, MPHOSPH6/MPP6 and MTREX/MTR4. Interacts (via C-terminus region) with SETX (via N-terminus domain); the interaction enhances SETX sumoylation. Interacts with DIS3; the interaction is direct.

The protein resides in the cytoplasm. It localises to the nucleus. Its subcellular location is the nucleolus. The protein localises to the nucleoplasm. Its function is as follows. Non-catalytic component of the RNA exosome complex which has 3'-&gt;5' exoribonuclease activity and participates in a multitude of cellular RNA processing and degradation events. In the nucleus, the RNA exosome complex is involved in proper maturation of stable RNA species such as rRNA, snRNA and snoRNA, in the elimination of RNA processing by-products and non-coding 'pervasive' transcripts, such as antisense RNA species and promoter-upstream transcripts (PROMPTs), and of mRNAs with processing defects, thereby limiting or excluding their export to the cytoplasm. The RNA exosome may be involved in Ig class switch recombination (CSR) and/or Ig variable region somatic hypermutation (SHM) by targeting AICDA deamination activity to transcribed dsDNA substrates. In the cytoplasm, the RNA exosome complex is involved in general mRNA turnover and specifically degrades inherently unstable mRNAs containing AU-rich elements (AREs) within their 3' untranslated regions, and in RNA surveillance pathways, preventing translation of aberrant mRNAs. It seems to be involved in degradation of histone mRNA. The catalytic inactive RNA exosome core complex of 9 subunits (Exo-9) is proposed to play a pivotal role in the binding and presentation of RNA for ribonucleolysis, and to serve as a scaffold for the association with catalytic subunits and accessory proteins or complexes. EXOSC9 binds to ARE-containing RNAs. The polypeptide is Exosome complex component RRP45 (EXOSC9) (Homo sapiens (Human)).